Here is a 67-residue protein sequence, read N- to C-terminus: Small ribosomal subunit protein bS21 (67 aa).

This sequence belongs to the bacterial ribosomal protein bS21 family.

The polypeptide is Small ribosomal subunit protein bS21 (Granulibacter bethesdensis (strain ATCC BAA-1260 / CGDNIH1)).